Reading from the N-terminus, the 225-residue chain is Octanoyltransferase (225 aa).

Positions 42–219 (KNRQASMIFC…SICSALEYIN (178 aa)) constitute a BPL/LPL catalytic domain. Residues 79–86 (RGGKITWH), 149–151 (AIG), and 162–164 (GFA) each bind substrate. Residue Cys180 is the Acyl-thioester intermediate of the active site.

The protein belongs to the LipB family.

It localises to the cytoplasm. It catalyses the reaction octanoyl-[ACP] + L-lysyl-[protein] = N(6)-octanoyl-L-lysyl-[protein] + holo-[ACP] + H(+). The protein operates within protein modification; protein lipoylation via endogenous pathway; protein N(6)-(lipoyl)lysine from octanoyl-[acyl-carrier-protein]: step 1/2. Its function is as follows. Catalyzes the transfer of endogenously produced octanoic acid from octanoyl-acyl-carrier-protein onto the lipoyl domains of lipoate-dependent enzymes. Lipoyl-ACP can also act as a substrate although octanoyl-ACP is likely to be the physiological substrate. This chain is Octanoyltransferase, found in Tropheryma whipplei (strain TW08/27) (Whipple's bacillus).